We begin with the raw amino-acid sequence, 337 residues long: Putative 2-aminoethylphosphonate-binding periplasmic protein (337 aa).

Residues 1–21 (MKLSRLALLSVFALASAPSWA) form the signal peptide.

This sequence belongs to the bacterial solute-binding protein 1 family.

The protein localises to the periplasm. Its function is as follows. Probably part of the PhnSTUV complex (TC 3.A.1.11.5) involved in 2-aminoethylphosphonate import. This is Putative 2-aminoethylphosphonate-binding periplasmic protein (phnS) from Salmonella typhi.